The following is a 374-amino-acid chain: Carboxypeptidase O (374 aa).

A signal peptide spans 1–20; it reads MKPLLETLYLLGMLVPGGLG. A Peptidase M14 domain is found at 49-344; the sequence is IYHPMGEIYE…EAVLSVLDDV (296 aa). Positions 108 and 111 each coordinate Zn(2+). N-linked (GlcNAc...) asparagine glycans are attached at residues Asn-132, Asn-174, and Asn-187. His-236 lines the Zn(2+) pocket. Residue Asn-251 is glycosylated (N-linked (GlcNAc...) asparagine). Glu-310 (proton donor/acceptor) is an active-site residue. Residue Asp-352 is the site of GPI-anchor amidated aspartate attachment. Residues 353–374 constitute a propeptide, removed in mature form; the sequence is SAGRVTSATMLLGLLVSCMSLL.

This sequence belongs to the peptidase M14 family. The cofactor is Zn(2+). In terms of processing, N-glycosylated. As to expression, detected in enterocytes of the ileum.

The protein resides in the apical cell membrane. Its activity is regulated as follows. Strongly inhibited by potato carboxypeptidase inhibitor, and the chelating agents EDTA and 1,10-phenanthroline. Also inhibited by compounds with multiple carboxylic acid groups such as citrate and succinate, and to a lesser exent the amino acids aspartate and glutamate. Not significantly inhibited by benzylsuccinic acid. Its function is as follows. Carboxypeptidase which preferentially cleaves C-terminal acidic residues from peptides and proteins. Can also cleave C-terminal hydrophobic amino acids, with a preference for small residues over large residues. This chain is Carboxypeptidase O, found in Homo sapiens (Human).